Consider the following 595-residue polypeptide: DNA mismatch repair protein MutL (595 aa).

The protein belongs to the DNA mismatch repair MutL/HexB family.

Its function is as follows. This protein is involved in the repair of mismatches in DNA. It is required for dam-dependent methyl-directed DNA mismatch repair. May act as a 'molecular matchmaker', a protein that promotes the formation of a stable complex between two or more DNA-binding proteins in an ATP-dependent manner without itself being part of a final effector complex. In Endomicrobium trichonymphae, this protein is DNA mismatch repair protein MutL.